The primary structure comprises 1738 residues: Sodium leak channel NALCN (1738 aa).

Topologically, residues 1–36 (MLKRKQSSRVEAQPVTDFGPDESLSDNADILWINKP) are cytoplasmic. Residues 37-57 (WVHSLLRICAIISVISVCMNT) form a helical membrane-spanning segment. Residues 58-65 (PMTFEHYP) lie on the Extracellular side of the membrane. A helical transmembrane segment spans residues 66–90 (PLQYVTFTLDTLLMFLYTAEMIAKM). The Cytoplasmic portion of the chain corresponds to 91–106 (HIRGIVKGDSSYVKDR). The helical transmembrane segment at 107 to 129 (WCVFDGFMVFCLWVSLVLQVFEI) threads the bilayer. Topologically, residues 130 to 137 (ADIVDQMS) are extracellular. A helical; Voltage-sensor transmembrane segment spans residues 138–158 (PWGMLRIPRPLIMIRAFRIYF). At 159–173 (RFELPRTRITNILKR) the chain is on the cytoplasmic side. Residues 174–199 (SGEQIWSVSIFLLFFLLLYGILGVQM) traverse the membrane as a helical segment. Topologically, residues 200–269 (FGTFTYHCVV…YSGFNEIGTS (70 aa)) are extracellular. Disulfide bonds link C207-C239 and C229-C245. N-linked (GlcNAc...) asparagine glycosylation is found at N210 and N216. Positions 270 to 289 (IFTVYEASSQEGWVFLMYRA) form an intramembrane region, pore-forming. Residues 290-294 (IDSFP) lie on the Extracellular side of the membrane. The chain crosses the membrane as a helical span at residues 295 to 322 (RWRSYFYFITLIFFLAWLVKNVFIAVII). Over 323-382 (ETFAEIRVQFQQMWGTRSSTTSTATTQMFHEDAAGGWQLVAVDVNKPQGRAPACLQKMMR) the chain is Cytoplasmic. The helical transmembrane segment at 383–403 (SSVFHMFILSMVTVDVIVAAS) threads the bilayer. At 404–416 (NYYKGENFRRQYD) the chain is on the extracellular side. A helical membrane pass occupies residues 417-439 (EFYLAEVAFTVLFDLEALLKIWC). At 440-447 (LGFTGYIS) the chain is on the cytoplasmic side. A helical transmembrane segment spans residues 448–468 (SSLHKFELLLVIGTTLHVYPD). Over 469–472 (LYHS) the chain is Extracellular. A helical; Voltage-sensor membrane pass occupies residues 473–492 (QFTYFQVLRVVRLIKISPAL). Topologically, residues 493–502 (EDFVYKIFGP) are cytoplasmic. Residues 503-530 (GKKLGSLVVFTASLLIVMSAISLQMFCF) form a helical membrane-spanning segment. Residues 531 to 543 (VEELDRFTTFPRA) lie on the Extracellular side of the membrane. The pore-forming intramembrane region spans 544–563 (FMSMFQILTQEGWVDVMDQT). At 564–578 (LNAVGHMWAPLVAIY) the chain is on the extracellular side. A helical transmembrane segment spans residues 579–599 (FILYHLFATLILLSLFVAVIL). The Cytoplasmic segment spans residues 600 to 886 (DNLELDEDLK…QLYDLLGLVT (287 aa)). Residues 762–785 (QERRSLRHGSNSQRISRGKSLETL) form a disordered region. Residues 795-830 (YRNAQREDSEIKMIQEKKEQAEMKRKVQEEELRENH) are a coiled coil. Residues 887-906 (YLDWVMITVTICSCISMMFE) traverse the membrane as a helical segment. Over 907-915 (SPFRRVMHA) the chain is Extracellular. A helical transmembrane segment spans residues 916–939 (PTLQIAEYVFVIFMSIELNLKIMA). At 940 to 947 (DGLFFTPT) the chain is on the cytoplasmic side. Residues 948–972 (AVIRDFGGVMDIFIYLVSLIFLCWM) form a helical membrane-spanning segment. Over 973–980 (PQNVPAES) the chain is Extracellular. A helical; Voltage-sensor transmembrane segment spans residues 981 to 1003 (GAQLLMVLRCLRPLRIFKLVPQM). Residues 1004 to 1015 (RKVVRELFSGFK) lie on the Cytoplasmic side of the membrane. The chain crosses the membrane as a helical span at residues 1016–1039 (EIFLVSILLLTLMLVFASFGVQLF). Topologically, residues 1040–1104 (AGKLAKCNDP…NFNFDNVGNA (65 aa)) are extracellular. C1046 and C1057 are joined by a disulfide. An N-linked (GlcNAc...) asparagine glycan is attached at N1064. Residues 1105-1124 (MLALFEVLSLKGWVEVRDVI) constitute an intramembrane region (pore-forming). The Extracellular segment spans residues 1125–1129 (IHRVG). A helical membrane pass occupies residues 1130 to 1159 (PIHGIYIHVFVFLGCMIGLTLFVGVVIANF). Topologically, residues 1160-1210 (NENKGTALLTVDQRRWEDLKSRLKIAQPLHLPPRPDNDGFRAKMYDITQHP) are cytoplasmic. A helical membrane pass occupies residues 1211–1227 (FFKRTIALLVLAQSVLL). The Extracellular portion of the chain corresponds to 1228–1236 (SVKWDVDDP). Residues 1237 to 1260 (VTVPLATMSVVFTFIFVLEVTMKI) form a helical membrane-spanning segment. Residues 1261-1271 (IAMSPAGFWQS) are Cytoplasmic-facing. The chain crosses the membrane as a helical span at residues 1272–1293 (RRNRYDLLVTSLGVVWVVLHFA). The Extracellular segment spans residues 1294–1296 (LLN). The helical; Voltage-sensor transmembrane segment at 1297–1318 (AYTYMMGACVIVFRFFSICGKH) threads the bilayer. Residues 1319 to 1331 (VTLKMLLLTVVVS) are Cytoplasmic-facing. Residues 1332-1357 (MYKSFFIIVGMFLLLLCYAFAGVVLF) traverse the membrane as a helical segment. Residues 1358-1378 (GTVKYGENINRHANFSSAGKA) lie on the Extracellular side of the membrane. The segment at residues 1379–1398 (ITVLFRIVTGEDWNKIMHDC) is an intramembrane region (pore-forming). At 1399–1420 (MVQPPFCTPDEFTYWATDCGNY) the chain is on the extracellular side. An intrachain disulfide couples C1405 to C1417. The chain crosses the membrane as a helical span at residues 1421-1447 (AGALMYFCSFYVIIAYIMLNLLVAIIV). At 1448-1738 (ENFSLFYSTE…DESGDDLLDI (291 aa)) the chain is on the cytoplasmic side. The disordered stretch occupies residues 1602–1679 (EQERSRFLNP…WRLPSAPKPI (78 aa)). The segment covering 1613–1631 (SIETTQPSEDSNANSQDHS) has biased composition (polar residues). Residues 1633-1648 (QPETSSQQQLLSPTLS) show a composition bias toward low complexity.

The protein belongs to the NALCN family. Found in a complex with NALCN, UNC79, UNC80 and NACL1; these auxiliary subunits are indispensable for the function of the NALCN channel. Interacts with UNC80; required for the NALCN activation/inhibition by GPCRs in neurons. Found in a complex with NALCN, UNC79 and UNC80; UNC80 bridges NALCN to UNC79. Interacts with CHRM3. In terms of processing, phosphorylated on tyrosine residues. As to expression, widely expressed in the brain and spinal cord neurons. Expressed also in pancreatic islet cells.

Its subcellular location is the cell membrane. The catalysed reaction is Na(+)(in) = Na(+)(out). Inhibited by low micromolar concentrations of Gd(3+) and high micromolar concentrations of verapamil. Insensitive to tetrodotoxin (TTX) and potentiated by low external Ca(2+) concentration. Voltage-gated ion channel responsible for the resting Na(+) permeability that controls neuronal excitability. NALCN channel functions as a multi-protein complex, which consists at least of NALCN, NALF1, UNC79 and UNC80. NALCN is the voltage-sensing, pore-forming subunit of the NALCN channel complex. NALCN channel complex is constitutively active and conducts monovalent cations but is blocked by physiological concentrations of extracellular divalent cations. In addition to its role in regulating neuronal excitability, is required for normal respiratory rhythm, systemic osmoregulation by controlling the serum sodium concentration and in the regulation of the intestinal pace-making activity in the interstitial cells of Cajal. Plays a critical role in both maintenance of spontaneous firing of substantia nigra pars reticulata (SNr) neurons and physiological modulation of SNr neuron excitability. NALCN channel is also activated by neuropeptides such as neurotensin and substance P (SP) through a SRC family kinases-dependent pathway. In addition, NALCN activity is enhanced/modulated by several GPCRs, such as CHRM3. The protein is Sodium leak channel NALCN (Nalcn) of Mus musculus (Mouse).